The sequence spans 317 residues: L-lactate dehydrogenase (317 aa).

NAD(+) contacts are provided by residues Val-16, Asp-37, Arg-42, Tyr-67, and 81-82 (GA). Substrate-binding residues include Gln-84 and Arg-90. Residues Ser-103, 120-122 (AAN), and Ser-145 each bind NAD(+). A substrate-binding site is contributed by 122–125 (NPVD). 150–153 (DSAR) contacts substrate. Catalysis depends on His-177, which acts as the Proton acceptor. A Phosphotyrosine modification is found at Tyr-221. Thr-230 lines the substrate pocket.

The protein belongs to the LDH/MDH superfamily. LDH family. In terms of assembly, homotetramer.

The protein resides in the cytoplasm. The enzyme catalyses (S)-lactate + NAD(+) = pyruvate + NADH + H(+). It participates in fermentation; pyruvate fermentation to lactate; (S)-lactate from pyruvate: step 1/1. Its function is as follows. Catalyzes the conversion of lactate to pyruvate. The polypeptide is L-lactate dehydrogenase (Limosilactobacillus fermentum (strain NBRC 3956 / LMG 18251) (Lactobacillus fermentum)).